Here is a 66-residue protein sequence, read N- to C-terminus: Beta-defensin 134 (66 aa).

Positions 1–19 (MKPLLVVFVFLFLWDPVLA) are cleaved as a signal peptide. Cystine bridges form between Cys-32–Cys-58, Cys-38–Cys-52, and Cys-42–Cys-59.

The protein belongs to the beta-defensin family.

Its subcellular location is the secreted. Its function is as follows. Has antibacterial activity. The sequence is that of Beta-defensin 134 (DEFB134) from Homo sapiens (Human).